A 335-amino-acid chain; its full sequence is Non-structural protein P9-1 (335 aa).

Low complexity predominate over residues 27–42 (FNANTKNQNQNTSNTQ). The tract at residues 27-48 (FNANTKNQNQNTSNTQSSGGIT) is disordered.

The polypeptide is Non-structural protein P9-1 (S9) (Fiji disease virus (isolate Sugarcane) (FDV)).